A 350-amino-acid polypeptide reads, in one-letter code: NAD-dependent protein deacetylase sirtuin-2 (350 aa).

Positions 4–14 match the Nuclear export signal motif; the sequence is LRNLFTQTLGL. S16 is modified (phosphoserine). One can recognise a Deacetylase sirtuin-type domain in the interval 20 to 301; the sequence is RLLDELTLEG…LALADLLGWK (282 aa). NAD(+) contacts are provided by residues 48 to 52 and 58 to 60; these read AGIST and DFR. Phosphoserine is present on S63. 130 to 133 contacts NAD(+); sequence QNID. The active-site Proton acceptor is H150. Zn(2+) is bound by residues C158 and C163. S170 carries the post-translational modification Phosphoserine. The Zn(2+) site is built by C184 and C187. NAD(+) contacts are provided by residues 225-226, 249-251, and C287; these read TS and NKE. The segment at 312–350 is disordered; the sequence is ANIDAQSGSQASNPSATVSPRKSPPPAKEAARTKEKEEH. A compositionally biased stretch (polar residues) spans 315-331; the sequence is DAQSGSQASNPSATVSP. Phosphoserine occurs at positions 330 and 334. The segment covering 340-350 has biased composition (basic and acidic residues); it reads EAARTKEKEEH.

This sequence belongs to the sirtuin family. Class I subfamily. In terms of assembly, interacts with CDC20, FOXO3 and FZR1. Associates with microtubules in primary cortical mature neurons. Homotrimer. Interacts (via both phosphorylated, unphosphorylated, active or inactive forms) with HDAC6; the interaction is necessary for the complex to interact with alpha-tubulin, suggesting that these proteins belong to a large complex that deacetylates the cytoskeleton. Interacts with FOXO1; the interaction is disrupted upon serum-starvation or oxidative stress, leading to increased level of acetylated FOXO1 and induction of autophagy. Interacts with RELA; the interaction occurs in the cytoplasm and is increased in a TNF-alpha-dependent manner. Interacts with HOXA10; the interaction is direct. Interacts with YWHAB and YWHAG; the interactions occur in a AKT-dependent manner and increase SIRT2-dependent TP53 deacetylation. Interacts with MAPK1/ERK2 and MAPK3/ERK1; the interactions increase SIRT2 stability and deacetylation activity. Interacts (phosphorylated form) with KMT5A isoform 2; the interaction is direct, stimulates KMT5A-mediated methyltransferase activity on histone at 'Lys-20' (H4K20me1) and is increased in a H(2)O(2)-induced oxidative stress-dependent manner. Interacts with G6PD; the interaction is enhanced by H(2)O(2) treatment. Interacts with a G1/S-specific cyclin E-CDK2 complex. Interacts with AURKA, CDK5R1 (p35 form) and CDK5 and HIF1A. Interacts with the tRNA ligase SARS1; recruited to the VEGFA promoter via interaction with SARS1. Interacts with BEX4; negatively regulates alpha-tubulin deacetylation by SIRT2. Zn(2+) serves as cofactor. Phosphorylated at phosphoserine and phosphothreonine. Phosphorylated at Ser-330 by a mitotic kinase CDK1/cyclin B at the G2/M transition; phosphorylation regulates the delay in cell-cycle progression. Phosphorylated at Ser-330 by a mitotic kinase G1/S-specific cyclin E/Cdk2 complex; phosphorylation inactivates SIRT2-mediated alpha-tubulin deacetylation and thereby negatively regulates cell adhesion, cell migration and neurite outgrowth during neuronal differentiation. Phosphorylated by cyclin A/Cdk2 and p35-Cdk5 complexes and to a lesser extent by the cyclin D3/Cdk4 and cyclin B/Cdk1, in vitro. Dephosphorylated at Ser-330 by CDC14A and CDC14B around early anaphase. In terms of processing, acetylated by EP300; acetylation leads both to the decreased of SIRT2-mediated alpha-tubulin deacetylase activity and SIRT2-mediated down-regulation of TP53 transcriptional activity. Post-translationally, ubiquitinated. Expressed in the cerebellum, cerebral cortex and cervival spinal cord. Expressed in Purkinje cells, oligodendrocytes and Schwann cells (at protein level). Expressed in the central nervous system (CNS).

The protein localises to the nucleus. It is found in the cytoplasm. The protein resides in the perinuclear region. Its subcellular location is the cytoskeleton. It localises to the microtubule organizing center. The protein localises to the centrosome. It is found in the centriole. The protein resides in the spindle. Its subcellular location is the midbody. It localises to the chromosome. The protein localises to the perikaryon. It is found in the cell projection. The protein resides in the growth cone. Its subcellular location is the myelin membrane. It carries out the reaction N(6)-acetyl-L-lysyl-[protein] + NAD(+) + H2O = 2''-O-acetyl-ADP-D-ribose + nicotinamide + L-lysyl-[protein]. It catalyses the reaction N(6)-tetradecanoyl-L-lysyl-[protein] + NAD(+) + H2O = 2''-O-tetradecanoyl-ADP-D-ribose + nicotinamide + L-lysyl-[protein]. The enzyme catalyses N(6)-hexadecanoyl-L-lysyl-[protein] + NAD(+) + H2O = 2''-O-hexadecanoyl-ADP-D-ribose + nicotinamide + L-lysyl-[protein]. With respect to regulation, inhibited by Sirtinol, A3 and M15 small molecules. Inhibited by nicotinamide. Inhibited by a macrocyclic peptide inhibitor S2iL5. Inhibited by EP300-induced acetylation. In terms of biological role, NAD-dependent protein deacetylase, which deacetylates internal lysines on histone and alpha-tubulin as well as many other proteins such as key transcription factors. Participates in the modulation of multiple and diverse biological processes such as cell cycle control, genomic integrity, microtubule dynamics, cell differentiation, metabolic networks, and autophagy. Plays a major role in the control of cell cycle progression and genomic stability. Functions in the antephase checkpoint preventing precocious mitotic entry in response to microtubule stress agents, and hence allowing proper inheritance of chromosomes. Positively regulates the anaphase promoting complex/cyclosome (APC/C) ubiquitin ligase complex activity by deacetylating CDC20 and FZR1, then allowing progression through mitosis. Associates both with chromatin at transcriptional start sites (TSSs) and enhancers of active genes. Plays a role in cell cycle and chromatin compaction through epigenetic modulation of the regulation of histone H4 'Lys-20' methylation (H4K20me1) during early mitosis. Specifically deacetylates histone H4 at 'Lys-16' (H4K16ac) between the G2/M transition and metaphase enabling H4K20me1 deposition by KMT5A leading to ulterior levels of H4K20me2 and H4K20me3 deposition throughout cell cycle, and mitotic S-phase progression. Deacetylates KMT5A modulating KMT5A chromatin localization during the mitotic stress response. Also deacetylates histone H3 at 'Lys-57' (H3K56ac) during the mitotic G2/M transition. During oocyte meiosis progression, may deacetylate histone H4 at 'Lys-16' (H4K16ac) and alpha-tubulin, regulating spindle assembly and chromosome alignment by influencing microtubule dynamics and kinetochore function. Deacetylates histone H4 at 'Lys-16' (H4K16ac) at the VEGFA promoter and thereby contributes to regulate expression of VEGFA, a key regulator of angiogenesis. Deacetylates alpha-tubulin at 'Lys-40' and hence controls neuronal motility, oligodendroglial cell arbor projection processes and proliferation of non-neuronal cells. Phosphorylation at Ser-368 by a G1/S-specific cyclin E-CDK2 complex inactivates SIRT2-mediated alpha-tubulin deacetylation, negatively regulating cell adhesion, cell migration and neurite outgrowth during neuronal differentiation. Deacetylates PARD3 and participates in the regulation of Schwann cell peripheral myelination formation during early postnatal development and during postinjury remyelination. Involved in several cellular metabolic pathways. Plays a role in the regulation of blood glucose homeostasis by deacetylating and stabilizing phosphoenolpyruvate carboxykinase PCK1 activity in response to low nutrient availability. Acts as a key regulator in the pentose phosphate pathway (PPP) by deacetylating and activating the glucose-6-phosphate G6PD enzyme, and therefore, stimulates the production of cytosolic NADPH to counteract oxidative damage. Maintains energy homeostasis in response to nutrient deprivation as well as energy expenditure by inhibiting adipogenesis and promoting lipolysis. Attenuates adipocyte differentiation by deacetylating and promoting FOXO1 interaction to PPARG and subsequent repression of PPARG-dependent transcriptional activity. Plays a role in the regulation of lysosome-mediated degradation of protein aggregates by autophagy in neuronal cells. Deacetylates FOXO1 in response to oxidative stress or serum deprivation, thereby negatively regulating FOXO1-mediated autophagy. Deacetylates a broad range of transcription factors and co-regulators regulating target gene expression. Deacetylates transcriptional factor FOXO3 stimulating the ubiquitin ligase SCF(SKP2)-mediated FOXO3 ubiquitination and degradation. Deacetylates HIF1A and therefore promotes HIF1A degradation and inhibition of HIF1A transcriptional activity in tumor cells in response to hypoxia. Deacetylates RELA in the cytoplasm inhibiting NF-kappaB-dependent transcription activation upon TNF-alpha stimulation. Inhibits transcriptional activation by deacetylating p53/TP53 and EP300. Also deacetylates EIF5A. Functions as a negative regulator on oxidative stress-tolerance in response to anoxia-reoxygenation conditions. Plays a role as tumor suppressor. In addition to protein deacetylase activity, also has activity toward long-chain fatty acyl groups and mediates protein-lysine demyristoylation and depalmitoylation of target proteins, such as ARF6 and KRAS, thereby regulating their association with membranes. The chain is NAD-dependent protein deacetylase sirtuin-2 (Sirt2) from Rattus norvegicus (Rat).